Reading from the N-terminus, the 485-residue chain is Carbohydrate sulfotransferase 7 (485 aa).

Over methionine 1 to cysteine 12 the chain is Cytoplasmic. A helical; Signal-anchor for type II membrane protein transmembrane segment spans residues lysine 13 to aspartate 33. The Lumenal segment spans residues serine 34 to threonine 485. Positions glutamate 66 to asparagine 88 are disordered. Residue asparagine 88 is glycosylated (N-linked (GlcNAc...) asparagine). Tryptophan 109 to phenylalanine 115 is a binding site for 3'-phosphoadenylyl sulfate. An N-linked (GlcNAc...) asparagine glycan is attached at asparagine 185. 3'-phosphoadenylyl sulfate is bound at residue arginine 277–serine 285. An N-linked (GlcNAc...) asparagine glycan is attached at asparagine 406. Phosphoserine is present on serine 461. A compositionally biased stretch (basic and acidic residues) spans arginine 465–threonine 475. Residues arginine 465 to threonine 485 form a disordered region.

Belongs to the sulfotransferase 1 family. Gal/GlcNAc/GalNAc subfamily.

It localises to the golgi apparatus membrane. The catalysed reaction is chondroitin beta-D-glucuronate + n 3'-phosphoadenylyl sulfate = chondroitin 6'-sulfate + n adenosine 3',5'-bisphosphate + n H(+). Functionally, sulfotransferase that utilizes 3'-phospho-5'-adenylyl sulfate (PAPS) as sulfonate donor to catalyze the transfer of sulfate to position 6 of non-reducing N-acetylglucosamine (GlcNAc) residues. Preferentially acts on mannose-linked GlcNAc. Also able to catalyze the transfer of sulfate to position 6 of the N-acetylgalactosamine (GalNAc) residue of chondroitin. Also acts on core 2 mucin-type oligosaccharide and N-acetyllactosamine oligomer with a lower efficiency. Has weak or no activity toward keratan sulfate and oligosaccharides containing the Galbeta1-4GlcNAc. Catalyzes 6-O-sulfation of beta-benzyl GlcNAc but not alpha- or beta-benzyl GalNAc. This is Carbohydrate sulfotransferase 7 (Chst7) from Rattus norvegicus (Rat).